Consider the following 271-residue polypeptide: Acetyl-coenzyme A carboxylase carboxyl transferase subunit alpha (271 aa).

Residues 1-247 (MSRELIRTAD…KKTILEALGE (247 aa)) enclose the CoA carboxyltransferase C-terminal domain.

It belongs to the AccA family. Acetyl-CoA carboxylase is a heterohexamer composed of biotin carboxyl carrier protein (AccB), biotin carboxylase (AccC) and two subunits each of ACCase subunit alpha (AccA) and ACCase subunit beta (AccD).

The protein localises to the cytoplasm. It catalyses the reaction N(6)-carboxybiotinyl-L-lysyl-[protein] + acetyl-CoA = N(6)-biotinyl-L-lysyl-[protein] + malonyl-CoA. Its pathway is lipid metabolism; malonyl-CoA biosynthesis; malonyl-CoA from acetyl-CoA: step 1/1. Component of the acetyl coenzyme A carboxylase (ACC) complex. First, biotin carboxylase catalyzes the carboxylation of biotin on its carrier protein (BCCP) and then the CO(2) group is transferred by the carboxyltransferase to acetyl-CoA to form malonyl-CoA. This is Acetyl-coenzyme A carboxylase carboxyl transferase subunit alpha from Clostridium perfringens (strain ATCC 13124 / DSM 756 / JCM 1290 / NCIMB 6125 / NCTC 8237 / Type A).